Reading from the N-terminus, the 31-residue chain is GMSGYIQGIPDFLKGYLHGISAANKHKKGRL.

Antibacterial activity against several lactic acid bacteria, Listeria, Streptococci, etc. The polypeptide is Bacteriocin lactocin-705 (Lacticaseibacillus paracasei (Lactobacillus paracasei)).